The following is a 345-amino-acid chain: Anthranilate phosphoribosyltransferase (345 aa).

5-phospho-alpha-D-ribose 1-diphosphate is bound by residues glycine 79, 82–83 (GD), threonine 87, 89–92 (NVST), 106–114 (KHGNRAVSG), and serine 118. Glycine 79 provides a ligand contact to anthranilate. Serine 91 contributes to the Mg(2+) binding site. Position 109 (asparagine 109) interacts with anthranilate. Position 164 (arginine 164) interacts with anthranilate. 2 residues coordinate Mg(2+): aspartate 223 and glutamate 224.

It belongs to the anthranilate phosphoribosyltransferase family. As to quaternary structure, homodimer. Mg(2+) serves as cofactor.

It catalyses the reaction N-(5-phospho-beta-D-ribosyl)anthranilate + diphosphate = 5-phospho-alpha-D-ribose 1-diphosphate + anthranilate. It functions in the pathway amino-acid biosynthesis; L-tryptophan biosynthesis; L-tryptophan from chorismate: step 2/5. Catalyzes the transfer of the phosphoribosyl group of 5-phosphorylribose-1-pyrophosphate (PRPP) to anthranilate to yield N-(5'-phosphoribosyl)-anthranilate (PRA). The sequence is that of Anthranilate phosphoribosyltransferase from Sulfurisphaera tokodaii (strain DSM 16993 / JCM 10545 / NBRC 100140 / 7) (Sulfolobus tokodaii).